A 489-amino-acid chain; its full sequence is N-succinylglutamate 5-semialdehyde dehydrogenase (489 aa).

Residue 216-221 (GSAATG) coordinates NAD(+). Active-site residues include glutamate 239 and cysteine 273.

The protein belongs to the aldehyde dehydrogenase family. AstD subfamily.

It carries out the reaction N-succinyl-L-glutamate 5-semialdehyde + NAD(+) + H2O = N-succinyl-L-glutamate + NADH + 2 H(+). It functions in the pathway amino-acid degradation; L-arginine degradation via AST pathway; L-glutamate and succinate from L-arginine: step 4/5. Functionally, catalyzes the NAD-dependent reduction of succinylglutamate semialdehyde into succinylglutamate. In Erwinia tasmaniensis (strain DSM 17950 / CFBP 7177 / CIP 109463 / NCPPB 4357 / Et1/99), this protein is N-succinylglutamate 5-semialdehyde dehydrogenase.